The following is a 94-amino-acid chain: Aspartyl/glutamyl-tRNA(Asn/Gln) amidotransferase subunit C (94 aa).

The protein belongs to the GatC family. Heterotrimer of A, B and C subunits.

The catalysed reaction is L-glutamyl-tRNA(Gln) + L-glutamine + ATP + H2O = L-glutaminyl-tRNA(Gln) + L-glutamate + ADP + phosphate + H(+). The enzyme catalyses L-aspartyl-tRNA(Asn) + L-glutamine + ATP + H2O = L-asparaginyl-tRNA(Asn) + L-glutamate + ADP + phosphate + 2 H(+). Its function is as follows. Allows the formation of correctly charged Asn-tRNA(Asn) or Gln-tRNA(Gln) through the transamidation of misacylated Asp-tRNA(Asn) or Glu-tRNA(Gln) in organisms which lack either or both of asparaginyl-tRNA or glutaminyl-tRNA synthetases. The reaction takes place in the presence of glutamine and ATP through an activated phospho-Asp-tRNA(Asn) or phospho-Glu-tRNA(Gln). This Caldicellulosiruptor saccharolyticus (strain ATCC 43494 / DSM 8903 / Tp8T 6331) protein is Aspartyl/glutamyl-tRNA(Asn/Gln) amidotransferase subunit C.